The primary structure comprises 319 residues: ATP-dependent 6-phosphofructokinase (319 aa).

Gly11 contacts ATP. Position 21–25 (Arg21–Arg25) interacts with ADP. Residues Arg72–Cys73 and Gly102–Ser105 each bind ATP. Position 103 (Glu103) interacts with Mg(2+). Thr126–Asp128 contacts substrate. Asp128 serves as the catalytic Proton acceptor. Lys155 is an ADP binding site. Residues Arg163 and Met170 to Arg172 each bind substrate. Residues Gly186–Glu188, Arg212, and Lys214–Asn216 each bind ADP. Residues Glu223, Arg244, and His250–Arg253 contribute to the substrate site.

It belongs to the phosphofructokinase type A (PFKA) family. ATP-dependent PFK group I subfamily. Prokaryotic clade 'B1' sub-subfamily. As to quaternary structure, homotetramer. Mg(2+) serves as cofactor.

The protein localises to the cytoplasm. The catalysed reaction is beta-D-fructose 6-phosphate + ATP = beta-D-fructose 1,6-bisphosphate + ADP + H(+). Its pathway is carbohydrate degradation; glycolysis; D-glyceraldehyde 3-phosphate and glycerone phosphate from D-glucose: step 3/4. With respect to regulation, allosterically activated by ADP and other diphosphonucleosides, and allosterically inhibited by phosphoenolpyruvate. In terms of biological role, catalyzes the phosphorylation of D-fructose 6-phosphate to fructose 1,6-bisphosphate by ATP, the first committing step of glycolysis. The sequence is that of ATP-dependent 6-phosphofructokinase from Thermotoga petrophila (strain ATCC BAA-488 / DSM 13995 / JCM 10881 / RKU-1).